Reading from the N-terminus, the 243-residue chain is Voltage-gated monoatomic cation channel TMEM109 (243 aa).

The first 33 residues, 1–33 (MAGAHSTPLWSRHLLKAVLMVLVALFLVHSASA), serve as a signal peptide directing secretion. At 34–83 (QSHREFASPGQQKKETSADILTQIGRSLKEMLDTWLGPETMHVISETLLQ) the chain is on the lumenal side. A helical transmembrane segment spans residues 84–104 (VMWAISSAISVACFALSGIAA). Over 105–135 (QLLSALGLDGEQLTQGLKLSPSQVQTLLLWG) the chain is Cytoplasmic. The helical transmembrane segment at 136–156 (AAALVIYWLLSLLLGLVLALL) threads the bilayer. Over 157–185 (GRILGGLKLVLFVAGFVALVRSVPDPSTR) the chain is Lumenal. The helical transmembrane segment at 186–205 (ALMLLALLTLFALLSRLTGS) threads the bilayer. The Cytoplasmic portion of the chain corresponds to 206-243 (RSSGSHLEAKVRGLERQIEELRGRQRRAAKMPRSMEEE).

As to quaternary structure, homooligomer. Interacts with CRYAB; in the cellular response to DNA damage.

Its subcellular location is the nucleus outer membrane. The protein resides in the endoplasmic reticulum membrane. It localises to the sarcoplasmic reticulum membrane. It catalyses the reaction K(+)(in) = K(+)(out). The enzyme catalyses Ca(2+)(in) = Ca(2+)(out). In terms of biological role, functions as a voltage-gated monoatomic cation channel permeable to both potassium and calcium. Plays a role in the cellular response to DNA damage. This Mus musculus (Mouse) protein is Voltage-gated monoatomic cation channel TMEM109.